We begin with the raw amino-acid sequence, 268 residues long: Undecaprenyl-diphosphatase (268 aa).

8 consecutive transmembrane segments (helical) span residues 3–23 (FFNL…EFIP), 46–66 (FEVL…SAKL), 84–104 (LGVL…HGFI), 107–127 (VLFE…FILL), 144–164 (YPLP…IPGV), 185–205 (AEFS…YDLF), 213–233 (FNDG…GVFV), and 246–266 (FALF…ALII).

The protein belongs to the UppP family.

It localises to the cell inner membrane. It carries out the reaction di-trans,octa-cis-undecaprenyl diphosphate + H2O = di-trans,octa-cis-undecaprenyl phosphate + phosphate + H(+). Its function is as follows. Catalyzes the dephosphorylation of undecaprenyl diphosphate (UPP). Confers resistance to bacitracin. The protein is Undecaprenyl-diphosphatase of Brucella abortus (strain S19).